The chain runs to 236 residues: Probable methylthioribulose-1-phosphate dehydratase (236 aa).

The interval 1-29 (MQNVQQPKKRKLSDEIIAEDEDYQRDPEH) is disordered. C103 is a substrate binding site. Zn(2+)-binding residues include H121, H123, and H201.

This sequence belongs to the aldolase class II family. MtnB subfamily. It depends on Zn(2+) as a cofactor.

The protein resides in the cytoplasm. The enzyme catalyses 5-(methylsulfanyl)-D-ribulose 1-phosphate = 5-methylsulfanyl-2,3-dioxopentyl phosphate + H2O. Its pathway is amino-acid biosynthesis; L-methionine biosynthesis via salvage pathway; L-methionine from S-methyl-5-thio-alpha-D-ribose 1-phosphate: step 2/6. Functionally, catalyzes the dehydration of methylthioribulose-1-phosphate (MTRu-1-P) into 2,3-diketo-5-methylthiopentyl-1-phosphate (DK-MTP-1-P). The protein is Probable methylthioribulose-1-phosphate dehydratase of Trichoplax adhaerens (Trichoplax reptans).